The chain runs to 77 residues: Ubiquitin-like protein NEDD8 (77 aa).

The segment at 70–72 (VLA) is interaction with uba-3. Glycine 76 is covalently cross-linked (Glycyl lysine isopeptide (Gly-Lys) (interchain with K-? in acceptor proteins)). Residue phenylalanine 77 is a propeptide.

The protein belongs to the ubiquitin family. As to quaternary structure, interacts with dcn-1. Covalently attached to cullins. May interact with atx-3. Cleavage of precursor form is necessary for function.

It localises to the nucleus. Its subcellular location is the cytoplasm. Functionally, ubiquitin-like protein which plays an important role in cell cycle control and embryogenesis. Covalent attachment to its substrates requires prior activation by the E1 complex uba-3-ula-1 and linkage to the E2 enzyme ubc-12. Attachment of ned-8 to cullins activates their associated E3 ubiquitin ligase activity, and thus promotes polyubiquitination and proteasomal degradation of cyclins and other regulatory proteins. This is Ubiquitin-like protein NEDD8 (ned-8) from Caenorhabditis elegans.